A 369-amino-acid chain; its full sequence is Cobalt-precorrin-5B C(1)-methyltransferase (369 aa).

The protein belongs to the CbiD family.

The catalysed reaction is Co-precorrin-5B + S-adenosyl-L-methionine = Co-precorrin-6A + S-adenosyl-L-homocysteine. It participates in cofactor biosynthesis; adenosylcobalamin biosynthesis; cob(II)yrinate a,c-diamide from sirohydrochlorin (anaerobic route): step 6/10. Its function is as follows. Catalyzes the methylation of C-1 in cobalt-precorrin-5B to form cobalt-precorrin-6A. This Methanococcus vannielii (strain ATCC 35089 / DSM 1224 / JCM 13029 / OCM 148 / SB) protein is Cobalt-precorrin-5B C(1)-methyltransferase.